Reading from the N-terminus, the 811-residue chain is MSMLLNLYRKALNLPLSLLVKTRSIPTDPVNELGLKLDQPIVYVLPYTSQTDLLILQKNCQALNLPDPLVNNDIQGVSLSRFVFLDEGRRFFKSKGAKSETELVFYRYLDLNRNDEQLDIQVVPVSVLWGRAPGKEKGLPVLRLLGTFQRLVTMLWFGRDNFIRFSQAVSLRYMITNHGTDENLAQKLARVAKMHFAKQRYSATGPQLPDRQAMFNKLLQSPAILAAIEDEAKKPKSSLEKARKEAEKILDEIAANVRHDSLRSADRVLSWLWNKLYQGINVQYAERVRKLALEGHELVYVPCHRSHMDYLLLSYILYHQGLVPPHIAAGINLNFWPAGPIFRSWGAFFIRRTFKGNRLYSTIFREYLAELFYRGYSVEYFIEGGRSRTGRLLDPKTGMMSMTLQALQRGLTRPISIVPVYIGYEHVLEVDTYAKELRGAEKEKENAGLVLRVIKKLKKLGQGYVNFGEPIPLNHYLNQYFPEWKEPLTDENGRPKWLNSAVEAVSKQVMVHINNAVAVNAKNLIGSVLLASRQRSLTREQLIEQVESYMQLFKNVPYTAEVTLPTDTAEAMLDHVINLPRSGVISEKDNFGEIIRLDRQSAVLMTYYRNNIQHLFVLPSLVASIVLHHETVSKDLIIQSVNRIYPFLQAELFMHFKAEEVRGHIEAILAEFVAQNLIKNESDMFVINRQRIRSLQLHSSGVRELLQRYYISLSILIEQPEISRNELEQESRSIAQRLSVLHGINAPEFFDKALFSTFSATLKEQGYFDEEGDTIVSKVQSTEELIRGLISVEIQHTVQGAMVKLEEVNNI.

Positions cysteine 303–methionine 308 match the HXXXXD motif motif.

This sequence belongs to the GPAT/DAPAT family.

The protein resides in the cell inner membrane. The catalysed reaction is sn-glycerol 3-phosphate + an acyl-CoA = a 1-acyl-sn-glycero-3-phosphate + CoA. It participates in phospholipid metabolism; CDP-diacylglycerol biosynthesis; CDP-diacylglycerol from sn-glycerol 3-phosphate: step 1/3. The polypeptide is Glycerol-3-phosphate acyltransferase (Glaesserella parasuis serovar 5 (strain SH0165) (Haemophilus parasuis)).